We begin with the raw amino-acid sequence, 529 residues long: Cytochrome P450 monooxygenase 45 (529 aa).

The chain crosses the membrane as a helical span at residues 24–44 (VLTICILALLTFVLREIVLYF). 2 N-linked (GlcNAc...) asparagine glycosylation sites follow: asparagine 185 and asparagine 322. Cysteine 454 provides a ligand contact to heme.

It belongs to the cytochrome P450 family. The cofactor is heme.

Its subcellular location is the membrane. Its pathway is secondary metabolite biosynthesis. In terms of biological role, cytochrome P450 monooxygenase that is able to use trans-stilbene as a substrate for oxidation. This is Cytochrome P450 monooxygenase 45 from Postia placenta (strain ATCC 44394 / Madison 698-R) (Brown rot fungus).